Consider the following 222-residue polypeptide: UPF0758 protein YicR (222 aa).

Residues 100–222 form the MPN domain; that stretch reads PLLSPEMTRE…YVSFAERGWI (123 aa). Zn(2+) is bound by residues histidine 171, histidine 173, and aspartate 184. A JAMM motif motif is present at residues 171 to 184; it reads HNHPSGCAEPSKAD.

The protein belongs to the UPF0758 family. YicR subfamily.

In Escherichia coli O45:K1 (strain S88 / ExPEC), this protein is UPF0758 protein YicR.